Reading from the N-terminus, the 336-residue chain is Ketol-acid reductoisomerase (NADP(+)) (336 aa).

The KARI N-terminal Rossmann domain occupies 1–182; the sequence is MAVIYYDKDA…GVTRAGVIET (182 aa). NADP(+) is bound by residues 25-28, Arg-48, Ser-51, Ser-53, and 83-86; these read YGSQ and DEHQ. Residue His-108 is part of the active site. Residue Gly-134 participates in NADP(+) binding. Positions 183-328 constitute a KARI C-terminal knotted domain; sequence TFKEETETDL…KELRKMMPWL (146 aa). Mg(2+)-binding residues include Asp-191, Glu-195, Glu-227, and Glu-231. Ser-252 lines the substrate pocket.

This sequence belongs to the ketol-acid reductoisomerase family. Mg(2+) is required as a cofactor.

It catalyses the reaction (2R)-2,3-dihydroxy-3-methylbutanoate + NADP(+) = (2S)-2-acetolactate + NADPH + H(+). The catalysed reaction is (2R,3R)-2,3-dihydroxy-3-methylpentanoate + NADP(+) = (S)-2-ethyl-2-hydroxy-3-oxobutanoate + NADPH + H(+). It functions in the pathway amino-acid biosynthesis; L-isoleucine biosynthesis; L-isoleucine from 2-oxobutanoate: step 2/4. It participates in amino-acid biosynthesis; L-valine biosynthesis; L-valine from pyruvate: step 2/4. In terms of biological role, involved in the biosynthesis of branched-chain amino acids (BCAA). Catalyzes an alkyl-migration followed by a ketol-acid reduction of (S)-2-acetolactate (S2AL) to yield (R)-2,3-dihydroxy-isovalerate. In the isomerase reaction, S2AL is rearranged via a Mg-dependent methyl migration to produce 3-hydroxy-3-methyl-2-ketobutyrate (HMKB). In the reductase reaction, this 2-ketoacid undergoes a metal-dependent reduction by NADPH to yield (R)-2,3-dihydroxy-isovalerate. The protein is Ketol-acid reductoisomerase (NADP(+)) of Thermotoga maritima (strain ATCC 43589 / DSM 3109 / JCM 10099 / NBRC 100826 / MSB8).